The sequence spans 463 residues: GTPase Der (463 aa).

The interval 1-20 (MDEGDEDLISGRGFTEGARK) is disordered. 2 consecutive EngA-type G domains span residues 27-190 (GVLA…KQAE) and 202-375 (RRVA…ESWD). Residues 33 to 40 (GRPNVGKS), 80 to 84 (DTGGW), 142 to 145 (NKID), 208 to 215 (GRPNVGKS), 255 to 259 (DTAGI), and 320 to 323 (NKWD) each bind GTP. The 83-residue stretch at 376–458 (QRIPTGKLNA…PIQISVNIRE (83 aa)) folds into the KH-like domain.

Belongs to the TRAFAC class TrmE-Era-EngA-EngB-Septin-like GTPase superfamily. EngA (Der) GTPase family. As to quaternary structure, associates with the 50S ribosomal subunit.

In terms of biological role, GTPase that plays an essential role in the late steps of ribosome biogenesis. This chain is GTPase Der, found in Bifidobacterium longum (strain NCC 2705).